The primary structure comprises 441 residues: Proline--tRNA ligase (441 aa).

This sequence belongs to the class-II aminoacyl-tRNA synthetase family. ProS type 2 subfamily. As to quaternary structure, homodimer.

It localises to the cytoplasm. The catalysed reaction is tRNA(Pro) + L-proline + ATP = L-prolyl-tRNA(Pro) + AMP + diphosphate. Catalyzes the attachment of proline to tRNA(Pro) in a two-step reaction: proline is first activated by ATP to form Pro-AMP and then transferred to the acceptor end of tRNA(Pro). This is Proline--tRNA ligase from Methylorubrum extorquens (strain PA1) (Methylobacterium extorquens).